The sequence spans 251 residues: Triosephosphate isomerase (251 aa).

Residue 8 to 10 (NWK) participates in substrate binding. The active-site Electrophile is the H97. The Proton acceptor role is filled by E170. Residues G176, S215, and 236 to 237 (GG) contribute to the substrate site.

Belongs to the triosephosphate isomerase family. As to quaternary structure, homodimer.

It localises to the cytoplasm. The catalysed reaction is D-glyceraldehyde 3-phosphate = dihydroxyacetone phosphate. It participates in carbohydrate biosynthesis; gluconeogenesis. Its pathway is carbohydrate degradation; glycolysis; D-glyceraldehyde 3-phosphate from glycerone phosphate: step 1/1. In terms of biological role, involved in the gluconeogenesis. Catalyzes stereospecifically the conversion of dihydroxyacetone phosphate (DHAP) to D-glyceraldehyde-3-phosphate (G3P). The chain is Triosephosphate isomerase from Nitratidesulfovibrio vulgaris (strain DSM 19637 / Miyazaki F) (Desulfovibrio vulgaris).